The chain runs to 239 residues: Ribonuclease HII (239 aa).

The 192-residue stretch at 30-221 (GPVAGVDEVG…VRRVATRSNG (192 aa)) folds into the RNase H type-2 domain. The a divalent metal cation site is built by D36, E37, and D130. The tract at residues 217–239 (TRSNGAATAEREADPPQERDGTG) is disordered. The segment covering 225 to 239 (AEREADPPQERDGTG) has biased composition (basic and acidic residues).

This sequence belongs to the RNase HII family. Mn(2+) is required as a cofactor. The cofactor is Mg(2+).

It is found in the cytoplasm. The catalysed reaction is Endonucleolytic cleavage to 5'-phosphomonoester.. Its function is as follows. Endonuclease that specifically degrades the RNA of RNA-DNA hybrids. This chain is Ribonuclease HII, found in Mycobacterium ulcerans (strain Agy99).